The primary structure comprises 292 residues: E3 ubiquitin-protein ligase RNF144A (292 aa).

Residues 16–236 (PLVSCKLCLG…YDKGPCRNKL (221 aa)) form a TRIAD supradomain region. The Zn(2+) site is built by Cys20, Cys23, Cys43, Cys46, Cys111, Cys116, Cys135, Cys138, Cys143, Cys146, His151, Cys156, Cys185, and Cys188. The RING-type 1 zinc-finger motif lies at 20–70 (CKLCLGEYPVEQMTTIAQCQCIFCTLCLKQYVELLIKEGLETAISCPDAAC). The segment at 91 to 156 (QRYKKLQFER…KASWHPGQGC (66 aa)) adopts an IBR-type zinc-finger fold. The segment at 185-214 (CPKCKVYIERDEGCAQMMCKNCKHAFCWYC) adopts an RING-type 2; atypical zinc-finger fold. Residue Cys198 is part of the active site. Zn(2+)-binding residues include Cys203, Cys206, Cys211, Cys214, His226, and Cys232. A helical transmembrane segment spans residues 250–270 (VVGIFAGFGLLLLVASPFLLL).

This sequence belongs to the RBR family. RNF144 subfamily. In terms of assembly, self-associates. Interacts with UBE2L3. Auto-ubiquitinated.

Its subcellular location is the cell membrane. It is found in the cytoplasmic vesicle membrane. It localises to the endosome membrane. The protein resides in the endoplasmic reticulum membrane. The catalysed reaction is [E2 ubiquitin-conjugating enzyme]-S-ubiquitinyl-L-cysteine + [acceptor protein]-L-lysine = [E2 ubiquitin-conjugating enzyme]-L-cysteine + [acceptor protein]-N(6)-ubiquitinyl-L-lysine.. The protein operates within protein modification; protein ubiquitination. In terms of biological role, E3 ubiquitin-protein ligase which accepts ubiquitin from E2 ubiquitin-conjugating enzymes UBE2L3 and UBE2L6 in the form of a thioester and then directly transfers the ubiquitin to targeted substrates. Mediates the ubiquitination and degradation of the DNA damage kinase PRKDC during DNA damage. Positively regulates DNA virus or exogenous cytosolic DNA-triggered innate immune response by mediating STING1 ubiquitination and increasing its 'Lys-6'-linked ubiquitination and translocation from the endoplasmic reticulum to the Golgi leading to downstream signaling pathways. Plays a positive role in EGF-dependent cell proliferation by prolonging EGF/EGFR signaling during EGF stimulation through EGFR ubiquitination. Increases ERK activity independently of EGFR signaling by promoting polyubiquitination and subsequent degradation of VRK3 in the cytosol. This is E3 ubiquitin-protein ligase RNF144A (RNF144A) from Homo sapiens (Human).